A 222-amino-acid chain; its full sequence is Sugar fermentation stimulation protein homolog (222 aa).

It belongs to the SfsA family.

The chain is Sugar fermentation stimulation protein homolog from Thermotoga sp. (strain RQ2).